A 273-amino-acid chain; its full sequence is Pyrroline-5-carboxylate reductase (273 aa).

This sequence belongs to the pyrroline-5-carboxylate reductase family.

It localises to the cytoplasm. It catalyses the reaction L-proline + NADP(+) = (S)-1-pyrroline-5-carboxylate + NADPH + 2 H(+). The catalysed reaction is L-proline + NAD(+) = (S)-1-pyrroline-5-carboxylate + NADH + 2 H(+). The protein operates within amino-acid biosynthesis; L-proline biosynthesis; L-proline from L-glutamate 5-semialdehyde: step 1/1. Its function is as follows. Catalyzes the reduction of 1-pyrroline-5-carboxylate (PCA) to L-proline. In Pseudomonas aeruginosa (strain ATCC 15692 / DSM 22644 / CIP 104116 / JCM 14847 / LMG 12228 / 1C / PRS 101 / PAO1), this protein is Pyrroline-5-carboxylate reductase.